A 359-amino-acid polypeptide reads, in one-letter code: Phosphoserine aminotransferase (359 aa).

Arg41 is an L-glutamate binding site. Residues Trp101, Thr151, Asp170, and Gln193 each contribute to the pyridoxal 5'-phosphate site. N6-(pyridoxal phosphate)lysine is present on Lys194. 235–236 (NT) provides a ligand contact to pyridoxal 5'-phosphate.

This sequence belongs to the class-V pyridoxal-phosphate-dependent aminotransferase family. SerC subfamily. As to quaternary structure, homodimer. It depends on pyridoxal 5'-phosphate as a cofactor.

It localises to the cytoplasm. It carries out the reaction O-phospho-L-serine + 2-oxoglutarate = 3-phosphooxypyruvate + L-glutamate. It catalyses the reaction 4-(phosphooxy)-L-threonine + 2-oxoglutarate = (R)-3-hydroxy-2-oxo-4-phosphooxybutanoate + L-glutamate. Its pathway is amino-acid biosynthesis; L-serine biosynthesis; L-serine from 3-phospho-D-glycerate: step 2/3. It functions in the pathway cofactor biosynthesis; pyridoxine 5'-phosphate biosynthesis; pyridoxine 5'-phosphate from D-erythrose 4-phosphate: step 3/5. In terms of biological role, catalyzes the reversible conversion of 3-phosphohydroxypyruvate to phosphoserine and of 3-hydroxy-2-oxo-4-phosphonooxybutanoate to phosphohydroxythreonine. This is Phosphoserine aminotransferase from Laribacter hongkongensis (strain HLHK9).